A 275-amino-acid polypeptide reads, in one-letter code: Elongation factor Ts (275 aa).

Positions 76–79 (TDFV) are involved in Mg(2+) ion dislocation from EF-Tu.

This sequence belongs to the EF-Ts family.

The protein localises to the cytoplasm. Associates with the EF-Tu.GDP complex and induces the exchange of GDP to GTP. It remains bound to the aminoacyl-tRNA.EF-Tu.GTP complex up to the GTP hydrolysis stage on the ribosome. The chain is Elongation factor Ts from Nocardia farcinica (strain IFM 10152).